The primary structure comprises 152 residues: Succinate dehydrogenase [ubiquinone] cytochrome b small subunit B, mitochondrial (152 aa).

Residues 1-21 constitute a mitochondrion transit peptide; it reads MATLLRVSSLCRANRASAFKS. At 22 to 56 the chain is on the mitochondrial matrix side; it reads LLIRPLPCLSQDLHMVQTSQIHTSPNHHAGSKAAS. A helical transmembrane segment spans residues 57–78; that stretch reads MHWTGERALSVALLGLLPAAYL. At 79–83 the chain is on the mitochondrial intermembrane side; sequence YPGAA. Residues 84–104 traverse the membrane as a helical segment; sequence MDYSLAAALTLHGHWGLGQVV. His-95 serves as a coordination point for heme b. Residues 105 to 113 lie on the Mitochondrial matrix side of the membrane; that stretch reads TDYVHGETK. Position 107 (Tyr-107) interacts with a ubiquinone. A helical transmembrane segment spans residues 114–135; sequence IKMANTSLFALSALTFAGLCYF. Over 136 to 152 the chain is Mitochondrial intermembrane; sequence NYHDVGICKAVAMLWSL.

The protein belongs to the CybS family. Component of complex II composed of four subunits: the flavoprotein (FP) SDHA, iron-sulfur protein (IP) SDHB, and a cytochrome b560 composed of SDHC and SDHD.

It localises to the mitochondrion inner membrane. The protein operates within carbohydrate metabolism; tricarboxylic acid cycle. Functionally, membrane-anchoring subunit of succinate dehydrogenase (SDH) that is involved in complex II of the mitochondrial electron transport chain and is responsible for transferring electrons from succinate to ubiquinone (coenzyme Q). SDH also oxidizes malate to the non-canonical enol form of oxaloacetate, enol-oxaloacetate. Enol-oxaloacetate, which is a potent inhibitor of the succinate dehydrogenase activity, is further isomerized into keto-oxaloacetate. The sequence is that of Succinate dehydrogenase [ubiquinone] cytochrome b small subunit B, mitochondrial (sdhd-b) from Xenopus laevis (African clawed frog).